A 163-amino-acid chain; its full sequence is Acetolactate synthase isozyme 3 small subunit (163 aa).

Residues 4-78 (ILSVLLENES…DVLRVSELGQ (75 aa)) form the ACT domain.

It belongs to the acetolactate synthase small subunit family. As to quaternary structure, dimer of large and small chains.

It catalyses the reaction 2 pyruvate + H(+) = (2S)-2-acetolactate + CO2. Its pathway is amino-acid biosynthesis; L-isoleucine biosynthesis; L-isoleucine from 2-oxobutanoate: step 1/4. It functions in the pathway amino-acid biosynthesis; L-valine biosynthesis; L-valine from pyruvate: step 1/4. Its activity is regulated as follows. Sensitive to valine inhibition. The polypeptide is Acetolactate synthase isozyme 3 small subunit (ilvH) (Escherichia coli (strain K12)).